The primary structure comprises 1586 residues: COP1-interactive protein 1 (1586 aa).

The NAB domain maps to 10-84 (LKSFFEPHFD…RQYDDLTGEI (75 aa)). Positions 88-119 (VNGKGESSSSSSSDSDSDHSSKRKVKRNGNGK) are disordered. 4 coiled-coil regions span residues 128–411 (TGAL…LKES), 437–1196 (ASEL…LKEE), 1225–1336 (LETL…TEAT), and 1372–1406 (MESL…SNQK). LRR repeat units lie at residues 173 to 187 (SEEI…TEKL), 188 to 210 (EDEK…VAGK), 216 to 239 (NQKL…GIKR), 261 to 285 (TSNL…MNSA), and 287 to 309 (EENK…GQTT). Basic and acidic residues predominate over residues 249–262 (DWKTTSDQLKDETS). Residues 249–286 (DWKTTSDQLKDETSNLKQQLEASEQRVSELTSGMNSAE) are disordered. The tract at residues 325-353 (KEKESEHSSLVELHKTHERESSSQVKELE) is disordered. LRR repeat units follow at residues 384-410 (IAEL…QLKE), 437-461 (ASEL…LKAA), 473-498 (VETM…KLKD), 560-586 (IAEL…QLKE), 613-637 (VSEL…LKDA), 649-674 (LEIM…ELKD), 768-792 (LSEL…LNAA), 824-850 (LAES…AHKR), 856-880 (VKEL…LNSS), 902-929 (ESTI…LFSL), 944-968 (LRGL…LKAA), 990-1014 (QIMV…ESKL), 1077-1101 (ISEL…LEDN), 1120-1144 (RAEL…SEEA), 1195-1220 (EEII…KIKG), 1247-1272 (VQMH…NLKN), 1372-1396 (MESL…ISNI), 1398-1417 (VKLR…LTEK), 1426-1448 (AKHL…TYRG), and 1450-1474 (IKEI…LTEK). The disordered stretch occupies residues 430–456 (QRDSSTRASELEAQLESSKQQVSDLSA). A compositionally biased stretch (polar residues) spans 444–455 (LESSKQQVSDLS). The tract at residues 965–985 (LKAAEEESRTMSTKISETSDE) is disordered. Residues 1496 to 1530 (VIERNHEKEKMNKEIEKKDEEIKKLGGKVREDEKE) are a coiled coil.

In terms of assembly, interacts with COP1 coiled-coil region. As to expression, mainly expressed in photosynthetic and vascular tissues. Accumulates in both dark-grown and light-grown seedlings roots and shoots, leaves and flowers (at protein level).

It is found in the cell membrane. Its subcellular location is the cytoplasm. The protein resides in the cytoskeleton. In terms of biological role, positive regulator of abscisic acid (ABA)-mediated signaling pathways involved in abiotic stress responses (e.g. osmotic stress) and leading to various plant adaptation (e.g. stomata closure). The sequence is that of COP1-interactive protein 1 from Arabidopsis thaliana (Mouse-ear cress).